Consider the following 334-residue polypeptide: Dihydroorotate dehydrogenase (quinone) (334 aa).

Residues 59–63 (AGLDK) and Thr-83 contribute to the FMN site. Lys-63 contacts substrate. 108-112 (NRMGF) serves as a coordination point for substrate. FMN-binding residues include Asn-136 and Asn-169. A substrate-binding site is contributed by Asn-169. Ser-172 serves as the catalytic Nucleophile. Asn-174 provides a ligand contact to substrate. FMN-binding residues include Lys-214 and Thr-242. 243–244 (NT) contacts substrate. FMN contacts are provided by residues Gly-265, Gly-294, and 315 to 316 (YS).

This sequence belongs to the dihydroorotate dehydrogenase family. Type 2 subfamily. In terms of assembly, monomer. The cofactor is FMN.

It localises to the cell membrane. It catalyses the reaction (S)-dihydroorotate + a quinone = orotate + a quinol. The protein operates within pyrimidine metabolism; UMP biosynthesis via de novo pathway; orotate from (S)-dihydroorotate (quinone route): step 1/1. In terms of biological role, catalyzes the conversion of dihydroorotate to orotate with quinone as electron acceptor. The sequence is that of Dihydroorotate dehydrogenase (quinone) from Acinetobacter baumannii (strain AB0057).